The following is a 344-amino-acid chain: tRNA N6-adenosine threonylcarbamoyltransferase (344 aa).

The Fe cation site is built by His-110 and His-114. Residues 132-136 (LVSGG), Asp-166, Gly-179, Asp-183, and Asn-278 each bind substrate. Asp-306 provides a ligand contact to Fe cation.

Belongs to the KAE1 / TsaD family. Requires Fe(2+) as cofactor.

Its subcellular location is the cytoplasm. It catalyses the reaction L-threonylcarbamoyladenylate + adenosine(37) in tRNA = N(6)-L-threonylcarbamoyladenosine(37) in tRNA + AMP + H(+). Functionally, required for the formation of a threonylcarbamoyl group on adenosine at position 37 (t(6)A37) in tRNAs that read codons beginning with adenine. Is involved in the transfer of the threonylcarbamoyl moiety of threonylcarbamoyl-AMP (TC-AMP) to the N6 group of A37, together with TsaE and TsaB. TsaD likely plays a direct catalytic role in this reaction. The sequence is that of tRNA N6-adenosine threonylcarbamoyltransferase from Nocardia farcinica (strain IFM 10152).